The chain runs to 375 residues: Histidine biosynthesis bifunctional protein HisB (375 aa).

Positions 1 to 168 are histidinol-phosphatase; that stretch reads MTPILFVDRD…GIAHELADAP (168 aa). Aspartate 8 functions as the Nucleophile in the catalytic mechanism. 3 residues coordinate Mg(2+): aspartate 8, aspartate 10, and aspartate 128. Aspartate 10 serves as the catalytic Proton donor. The tract at residues 169 to 375 is imidazoleglycerol-phosphate dehydratase; that stretch reads RRAVVQRNTK…TALPTTKGAL (207 aa).

The protein in the N-terminal section; belongs to the histidinol-phosphatase family. It in the C-terminal section; belongs to the imidazoleglycerol-phosphate dehydratase family. It depends on Mg(2+) as a cofactor.

The protein localises to the cytoplasm. It catalyses the reaction D-erythro-1-(imidazol-4-yl)glycerol 3-phosphate = 3-(imidazol-4-yl)-2-oxopropyl phosphate + H2O. The catalysed reaction is L-histidinol phosphate + H2O = L-histidinol + phosphate. It functions in the pathway amino-acid biosynthesis; L-histidine biosynthesis; L-histidine from 5-phospho-alpha-D-ribose 1-diphosphate: step 6/9. It participates in amino-acid biosynthesis; L-histidine biosynthesis; L-histidine from 5-phospho-alpha-D-ribose 1-diphosphate: step 8/9. The chain is Histidine biosynthesis bifunctional protein HisB from Xanthomonas euvesicatoria pv. vesicatoria (strain 85-10) (Xanthomonas campestris pv. vesicatoria).